Here is a 279-residue protein sequence, read N- to C-terminus: Diaminopimelate epimerase (279 aa).

Residues N11 and N72 each coordinate substrate. C81 functions as the Proton donor in the catalytic mechanism. Substrate-binding positions include 82–83, N187, and 205–206; these read GN and ER. The Proton acceptor role is filled by C215. A substrate-binding site is contributed by 216–217; it reads GT.

The protein belongs to the diaminopimelate epimerase family. As to quaternary structure, homodimer.

It localises to the cytoplasm. The enzyme catalyses (2S,6S)-2,6-diaminopimelate = meso-2,6-diaminopimelate. It participates in amino-acid biosynthesis; L-lysine biosynthesis via DAP pathway; DL-2,6-diaminopimelate from LL-2,6-diaminopimelate: step 1/1. Its function is as follows. Catalyzes the stereoinversion of LL-2,6-diaminopimelate (L,L-DAP) to meso-diaminopimelate (meso-DAP), a precursor of L-lysine and an essential component of the bacterial peptidoglycan. The chain is Diaminopimelate epimerase from Aquifex aeolicus (strain VF5).